The sequence spans 4543 residues: MGPLLALAGCLLALLAAPAARALEAPKTCSPKQFACKDQITCISKGWRCDGEKDCPDGSDESPDICPQSKVSRCQPNEHNCLGTELCIHMSKLCNGLHDCFDGSDEGPHCREQLANCTALGCQHHCVPTLSGPACYCNNSFQLAEDRRSCKDFDECTVYGTCSQTCTNTEGSYTCSCVEGYLLQPDNRSCKAKNEPVDRPPVLLIANSQNILATYLSGAPVPNITPTSAKQTTAMDFNYIEDTVCWVHVGDSASQTILKCAKIPNLKGFVEERSINISLSLHQVEQMAIDWLTGNFYFVDDIDDRIFVCNKNGLTCVTLLDLELYNPKGIALDPAMGKVFFTDYGQIPKVERCDMDGQNRTKLVDSKIVFPHGITLDLVSRLVYWADAYLDYIEVVDYEGKNRHTIIQGILIEHLYGLTVFENYLYATNSDNANAQQKTSVIRVNRFNSTEYQVVTRVDKGGALHIYHQRRQPTVRSHACEPDQFGKPGGCSDICLLGNSHKSRTCRCRSGFSLGSDGKSCKKPEHELFLVYGKGRPGIIRGMDMGAKVPDEHMIPIENLMNPRALDFHAETGFIYFADTTSYLIGRQKIDGTERETILKDGIHNVEGIAVDWMGNNLYWTDDGPKKTISVARLEKAAQTRKTLIEGKMTHPRAIVVDPLNGWMYWTDWEEDPKDSKRGKIERAWMDGSNRNVFITSKTVLWPNGLSLDIPAKILYWVDAFYDRIEMVYLNGTERKIVYEGPELNHAFGLCHYSSFLFWTEYRSGSIYRLDQSSKAVSLLRNERPPIFEIRMYDAQQQQVGSNKCRVNNGGCSSLCLATPRGRQCACAEDQILGADSVTCEANPSYIPPPQCQPGEFACKNNRCIQERWKCDGDNDCLDNSDEAPELCHQHTCPSDRFKCKNNRCIPNRWLCDGDNDCGNNEDESNSTCSARTCSPNQFSCASGRCIPISWTCDLDDDCGDRSDESASCAYPTCFPLTQFTCNNGRCININWRCDNDNDCGDNSDEAGCSHSCSSNQFKCNSGRCIPVHWTCDGDNDCGDYSDETHANCTNQATRPPGGCHTDEFQCRLDGLCIPMRWRCDGDTDCMDSSDEKNCEGVTHVCDPNVKFGCKDSARCISKAWVCDGDSDCEDNSDEENCESLVCKPPSHTCANNTSICLPPEKLCDGSDDCGDGSDEGELCDQCSLNNGGCSHNCTVAPGEGIVCSCPLGMELGADNKTCQIQSYCAKHLKCSQKCEQDKYNVKCSCYEGWMLEPDGESCRSLDPFKPFIIFSNRHEIRRIDLHRGDYSVLVPGLRNTIALDFHLNQSSLYWTDVVEDKIYRGKLLENGALTSFEVVIQYGLATPEGLAVDWIAGNIYWVESNLDQIEVAKLDGTMRTTLLAGDIEHPRAIALDPRYGILFWTDWDASLPRIEAASMSGAGRRTIHKETGSGGWPNGLTVDYLEKRILWIDARSDAIYSALYDGTGHIEVLRGHEYLSHPFAVTLYGGEVYWTDWRTNTLAKANKWTGHNVTVVQRTNTQPFDLQVYHPSRQPLAPNPCEANGGKGPCSHLCLINYNRTLSCACPHLMKLDKDNTTCYEFKKFLLYARQMEIRGVDIDNPYYNYIISFTVPDIDNVTVVDYDAVEQRIYWSDVRTQTIKRAFINGTGVETVVSADLPNAHGLSVDWVSRNLFWTSYDTNKKQINVARLDGSFKNAVIQGLDKPHCLVVHPLHGKLYWTDGDNISVANMDGSNRTLLFTNQRGPVGLAIDYPESKLYWISSGNGTINRCNLDGSDLEVIVAVKSQLSKATALAIMGDKLWWADQASERMGTCNKKDGTEVTVLRNSTTLVMLMKVYDESIQQAGSNPCSVNNGDCSQLCLPTSETSRSCMCTAGYSLKSGQQSCEGVGSFLLYSVHEGIRGIPLDPNDKSDALVPVSGTSLAVGIDFHAENDTIYWVDMGLSTISRAKRDQTWREDVVTNGIGRVEGIAVDWIAGNIYWTDQGFDVIEVARLNGSFRYVVISQGLDKPRAITVHPEKGYLFWTEWGQYPRIERSRLDGTERMVLVNVSISWPNGISVDYEDGKLYWCDARTDKIERIDLETGENREVVLSSDNMDMFSVSVFEDYIYWSDRTHANGSIKRGSKDNATESVSLRTGIGVQLKDIKVFNRARQKGTNVCAQNNGGCQQLCLFRGGGRRTCACAHGMLSEDGVSCRDYDGYLLYSERTILKSIHLSDENNLNAPIKPFEDAEHMKNVIALAFDYRYGTKGSNRIFYSDIHFGNIQQINDDGTGRRTIVENVGSVEGLAYHRGWDTLYWTSYTTSTITRHTVDQSRLGAFERETVITMSGDDHPRAFVLDECQNLMFWTNWNEQHPSIMRATLSGANVLIIIDQDIRTPNGLAIDHRAEKIYFSDATLDKIERCEYDGSHRHVILKSEPVHPFGLAVYGDYIFWTDWVRRAVQRANKYVGTDMKLLRVDIPQQPMGIIAVANDTDSCELSPCRVNNGGCQDLCLLTPKGHVNCSCRGERVLQEDFTCKALNSTCNVHDEFECGNGDCIDFSRTCDGVVHCKDKSDEKQSYCSSRKCKKGFLHCMNGRCVASRFWCNGVDDCGDNSDEVPCNKTSCAATEFRCRDGSCIGNSSRCNQFIDCEDASDEMNCTATDCSSYFKLGVKGTTFQKCEHTSLCYAPSWVCDGANDCGDYSDERNCPGGRKPKCPANYFACPSGRCIPMTWTCDKEDDCENGEDETHCSERQDKFCYPVQFECNNHRCISKLWVCDGADDCGDGSDEDSRCRLTTCSTGSFQCPGTYVCVPERWLCDGDKDCADGADETLAAGCLYNNTCDEREFMCGNRQCIPKHFVCDHDDDCGDGSDESPECEYPTCGPHEFRCANGRCLSNSQWECDGEFDCHDHSDEAPKNPRCSSPESKCNDSFFMCKNGKCIPEALLCDNNNDCADGSDELNCFINECLNKKLSGCSQECEDLKIGYKCRCRPGFRLKDDGKTCIDIDECSTTYPCSQKCINTLGSYKCLCIEGYKLKPDNPTSCKAVTDEEPFLIFANRYYLRKLNLDGSNYTLLKQGLNNAVALDFDYREQMIYWTDVTTQGSMIRRMHINGSNVQVLHRTGLSNPDGLAVDWVGGNLYWCDKGRDTIEVSKLNGAYRTVLVNSGLREPRALVVDVQNGYLYWTDWGDHSLIGKIGMDGTNRSVIVDTKITWPNGLTLDYINSRIYWADAREDYIEFASLDGSNRHTVLSQDIPHIFALTLFEDYIYWTDWETKSINRAHKTTGANKTLLISTLHRPMDIHIYHPYRQPDVPNHPCKTNNAGCSNLCLLSPGGGHKCACPTNFYLGSDGKTCVSNCTASQFVCKNDKCIPFWWKCDTEDDCGDRSDEPEDCPEFKCRPGQFQCSTGICTNPAFICDGDNDCQDNSDEANCDIHVCLPSQFKCTNTNRCIPGIFRCNGQDNCGDGEDEKDCPEVTCAPNQFQCAITKRCIPRVWVCDRDNDCVDGSDEPANCTQMTCGVDEFRCKDSGRCIPARWKCDGEDDCGDGSDEPKEECDERTCEPYQFRCKNNRCVPGRWQCDYDNDCGDNSDEESCTPRPCSESEFSCANGRCIAGRWKCDGDHDCADGSDEKDCIPRCEFDQYQCKNGHCIPMRWRCDADADCMDGTDEEDCGTGVRTCPLDEFQCNNTLRKPLAWKCDGEDDCGDNSDENPEECLKFQCPPNRPFRCKNDRVCLWIGRQCDGIDNCGDNTDEKDCESPTAKPKSCSQDKNEFLCENKKCISANLRCNFFDDCGDGSDEKSCSHEHKSYDCMTNTTMCGDEAQCIQAQSSTYCTCRRGFQKVPDKNSCQDVNECLRFGTCSQLCNNTKGSHVCSCAKNFMKTDNMCKAEGSEHQILYIADDNKIRSMYPFNPNSAYEPAFQGDENVRIDAMDIYVKGNKIYWTNWHTGRISYCELPASSAASTASNRNRRQIDGGVTHLNISGLKMPRGIAVDWVAGNIYWTDSGRDVIEVAQMKGENRKTLISGMIDEPHAIVVDPLRGTMYWSDWGNHPKIETAAMDGTLRETLVQDNIQWPTGLAVDYHNERLYWADAKLSVIGSIRLNGTDPVVAIDNKKGLSHPFSIDIFEDYIYGVTYINNRIFKIHKFGHKSVTNLTSGLNHATDVVLYHQYKQPEVTNPCDRKKCEWLCLLSPSGPVCTCPNGKRLDNGTCVLIPSPTASAVVPTTDTCDLVCLNGGSCFLNARKQAKCRCQPRYNGERCQINQCSDYCQNGGLCTASPSGMPTCRCPTGFTGSRCDQQVCTNYCHNNGSCTVNQGNQPNCRCPPTFIGDRCQYQQCFNYCENNGVCQMSRDGVKQCRCPPQFEGAQCQDNKCSRCQEGKCNINRQSGDVSCICPDGKIAPSCLTCDSYCLNGGTCSISDKTQLPECLCPLEVTGMRCEEFIVGEQQSGRTASIVIPILLLLLLLAVVAFAWYKWRIKGAKGFQHQRMTNGAMNVEIGNPTYKMYEGEPDDDVGELLDADFALDPDKPTNFTNPVYATLYMGAHSSRNSLASTDEKRELLARGADDDLTDPLA.

The first 21 residues, 1-21 (MGPLLALAGCLLALLAAPAAR), serve as a signal peptide directing secretion. Residues 22-4419 (ALEAPKTCSP…EFIVGEQQSG (4398 aa)) are Extracellular-facing. 2 LDL-receptor class A domains span residues 27–68 (KTCS…ICPQ) and 72–112 (SRCQ…HCRE). Cystine bridges form between Cys-29–Cys-42, Cys-36–Cys-55, Cys-49–Cys-66, Cys-74–Cys-87, Cys-81–Cys-100, and Cys-94–Cys-110. The 39-residue stretch at 113–151 (QLANCTALGCQHHCVPTLSGPACYCNNSFQLAEDRRSCK) folds into the EGF-like 1 domain. An N-linked (GlcNAc...) asparagine glycan is attached at Asn-116. Disulfide bonds link Cys-117/Cys-126, Cys-122/Cys-135, Cys-137/Cys-150, Cys-156/Cys-166, Cys-162/Cys-175, and Cys-177/Cys-190. Asn-138 carries N-linked (GlcNAc...) asparagine glycosylation. The EGF-like 2; calcium-binding domain maps to 152 to 191 (DFDECTVYGTCSQTCTNTEGSYTCSCVEGYLLQPDNRSCK). N-linked (GlcNAc...) asparagine glycans are attached at residues Asn-187 and Asn-276. 3 LDL-receptor class B repeats span residues 294 to 336 (GNFY…DPAM), 337 to 380 (GKVF…DLVS), and 381 to 424 (RLVY…FENY). N-linked (GlcNAc...) asparagine glycosylation occurs at Asn-359. Asn-448 carries an N-linked (GlcNAc...) asparagine glycan. The EGF-like 3 domain maps to 476–522 (RSHACEPDQFGKPGGCSDICLLGNSHKSRTCRCRSGFSLGSDGKSCK). Cystine bridges form between Cys-480/Cys-495, Cys-491/Cys-506, and Cys-508/Cys-521. LDL-receptor class B repeat units lie at residues 573–615 (GFIY…DWMG), 616–661 (NNLY…DPLN), 662–712 (GWMY…DIPA), and 713–756 (KILY…YSSF). Asn-731 is a glycosylation site (N-linked (GlcNAc...) asparagine). Positions 801–841 (GSNKCRVNNGGCSSLCLATPRGRQCACAEDQILGADSVTCE) constitute an EGF-like 4 domain. 33 cysteine pairs are disulfide-bonded: Cys-805–Cys-816, Cys-812–Cys-825, Cys-827–Cys-840, Cys-852–Cys-864, Cys-859–Cys-877, Cys-871–Cys-888, Cys-893–Cys-905, Cys-900–Cys-918, Cys-912–Cys-929, Cys-934–Cys-946, Cys-941–Cys-959, Cys-953–Cys-969, Cys-974–Cys-987, Cys-982–Cys-1000, Cys-994–Cys-1009, Cys-1013–Cys-1025, Cys-1020–Cys-1038, Cys-1032–Cys-1049, Cys-1060–Cys-1073, Cys-1067–Cys-1086, Cys-1080–Cys-1095, Cys-1102–Cys-1116, Cys-1110–Cys-1129, Cys-1123–Cys-1138, Cys-1143–Cys-1157, Cys-1150–Cys-1170, Cys-1164–Cys-1180, Cys-1183–Cys-1194, Cys-1190–Cys-1204, Cys-1206–Cys-1219, Cys-1225–Cys-1235, Cys-1231–Cys-1244, and Cys-1246–Cys-1259. LDL-receptor class A domains lie at 850–890 (PQCQ…LCHQ), 891–931 (HTCP…TCSA), 932–971 (RTCSPNQFSCASGRCIPISWTCDLDDDCGDRSDESASCAY), 972–1011 (PTCFPLTQFTCNNGRCININWRCDNDNDCGDNSDEAGCSH), 1011–1051 (HSCS…NCTN), 1058–1097 (GGCHTDEFQCRLDGLCIPMRWRCDGDTDCMDSSDEKNCEG), 1100–1140 (HVCD…NCES), and 1141–1180 (LVCKPPSHTCANNTSICLPPEKLCDGSDDCGDGSDEGELC). Residues Trp-869, Asp-872, Asp-874, Asp-876, Asp-882, and Glu-883 each contribute to the Ca(2+) site. The N-linked (GlcNAc...) asparagine glycan is linked to Asn-926. Ca(2+) is bound by residues Trp-1030, Asp-1033, Asp-1035, Asp-1037, Asp-1043, and Glu-1044. The N-linked (GlcNAc...) asparagine glycan is linked to Asn-1048. 6 residues coordinate Ca(2+): Trp-1078, Asp-1081, Asp-1083, Asp-1085, Asp-1091, and Glu-1092. N-linked (GlcNAc...) asparagine glycosylation is found at Asn-1152 and Asn-1153. EGF-like domains follow at residues 1181–1220 (DQCSLNNGGCSHNCTVAPGEGIVCSCPLGMELGADNKTCQ) and 1221–1260 (IQSYCAKHLKCSQKCEQDKYNVKCSCYEGWMLEPDGESCR). N-linked (GlcNAc...) asparagine glycans are attached at residues Asn-1193 and Asn-1216. Residue Asn-1305 is glycosylated (N-linked (GlcNAc...) asparagine). LDL-receptor class B repeat units follow at residues 1307 to 1353 (SSLY…DWIA), 1354 to 1396 (GNIY…DPRY), 1397 to 1443 (GILF…DYLE), 1444 to 1488 (KRIL…YGGE), and 1489 to 1529 (VYWT…YHPS). An N-linked (GlcNAc...) asparagine glycan is attached at Asn-1509. One can recognise an EGF-like 7 domain in the interval 1534 to 1577 (APNPCEANGGKGPCSHLCLINYNRTLSCACPHLMKLDKDNTTCY). Disulfide bonds link Cys-1538-Cys-1551, Cys-1547-Cys-1561, and Cys-1563-Cys-1576. Residues Asn-1556, Asn-1573, Asn-1614, and Asn-1643 are each glycosylated (N-linked (GlcNAc...) asparagine). LDL-receptor class B repeat units lie at residues 1625-1667 (QRIY…DWVS), 1668-1711 (RNLF…HPLH), 1712-1751 (GKLYWTDGDNISVANMDGSNRTLLFTNQRGPVGLAIDYPE), and 1752-1796 (SKLY…MGDK). 4 N-linked (GlcNAc...) asparagine glycosylation sites follow: Asn-1721, Asn-1731, Asn-1761, and Asn-1823. The EGF-like 8 domain maps to 1842 to 1883 (GSNPCSVNNGDCSQLCLPTSETSRSCMCTAGYSLKSGQQSCE). Intrachain disulfides connect Cys-1846-Cys-1857, Cys-1853-Cys-1867, and Cys-1869-Cys-1882. Asn-1929 carries an N-linked (GlcNAc...) asparagine glycan. LDL-receptor class B repeat units lie at residues 1930 to 1972 (DTIY…DWIA), 1973 to 2015 (GNIY…HPEK), 2016 to 2059 (GYLF…DYED), and 2060 to 2103 (GKLY…FEDY). 2 N-linked (GlcNAc...) asparagine glycosylation sites follow: Asn-1991 and Asn-2044. 2 N-linked (GlcNAc...) asparagine glycosylation sites follow: Asn-2113 and Asn-2123. Positions 2151-2191 (GTNVCAQNNGGCQQLCLFRGGGRRTCACAHGMLSEDGVSCR) constitute an EGF-like 9 domain. Cystine bridges form between Cys-2155–Cys-2166, Cys-2162–Cys-2176, and Cys-2178–Cys-2190. 5 LDL-receptor class B repeats span residues 2247 to 2288 (NRIF…HRGW), 2289 to 2337 (DTLY…DECQ), 2338 to 2382 (NLMF…DHRA), 2383 to 2425 (EKIY…YGDY), and 2426 to 2467 (IFWT…VAND). N-linked (GlcNAc...) asparagine glycosylation occurs at Asn-2466. The EGF-like 10 domain occupies 2472-2512 (ELSPCRVNNGGCQDLCLLTPKGHVNCSCRGERVLQEDFTCK). Disulfide bonds link Cys-2476-Cys-2487, Cys-2483-Cys-2497, and Cys-2499-Cys-2511. Asn-2496 carries N-linked (GlcNAc...) asparagine glycosylation. N-linked (GlcNAc...) asparagine glycosylation is present at Asn-2515. LDL-receptor class A domains follow at residues 2516 to 2557 (STCN…YCSS), 2558 to 2596 (RKCKKGFLHCMNGRCVASRFWCNGVDDCGDNSDEVPCNK), 2597 to 2635 (TSCAATEFRCRDGSCIGNSSRCNQFIDCEDASDEMNCTA), 2636 to 2684 (TDCS…NCPG), 2688 to 2730 (PKCP…RQDK), 2730 to 2769 (KFCYPVQFECNNHRCISKLWVCDGADDCGDGSDEDSRCRL), and 2770 to 2812 (TTCS…GCLY). 6 cysteine pairs are disulfide-bonded: Cys-2518/Cys-2531, Cys-2526/Cys-2544, Cys-2538/Cys-2555, Cys-2560/Cys-2572, Cys-2567/Cys-2585, and Cys-2579/Cys-2594. The N-linked (GlcNAc...) asparagine glycan is linked to Asn-2595. Disulfide bonds link Cys-2599-Cys-2611, Cys-2606-Cys-2624, Cys-2618-Cys-2633, Cys-2638-Cys-2660, Cys-2654-Cys-2673, Cys-2667-Cys-2682, Cys-2690-Cys-2702, Cys-2697-Cys-2715, Cys-2709-Cys-2724, Cys-2732-Cys-2744, Cys-2739-Cys-2757, Cys-2751-Cys-2767, Cys-2772-Cys-2785, Cys-2779-Cys-2798, and Cys-2792-Cys-2810. N-linked (GlcNAc...) asparagine glycans are attached at residues Asn-2614 and Asn-2632. N-linked (GlcNAc...) asparagine glycosylation is present at Asn-2813. LDL-receptor class A domains are found at residues 2814–2853 (NTCDEREFMCGNRQCIPKHFVCDHDDDCGDGSDESPECEY), 2854–2897 (PTCG…RCSS), and 2900–2938 (SKCNDSFFMCKNGKCIPEALLCDNNNDCADGSDELNCFI). 15 cysteine pairs are disulfide-bonded: Cys-2816–Cys-2828, Cys-2823–Cys-2841, Cys-2835–Cys-2851, Cys-2856–Cys-2868, Cys-2863–Cys-2882, Cys-2876–Cys-2895, Cys-2902–Cys-2914, Cys-2909–Cys-2927, Cys-2921–Cys-2936, Cys-2941–Cys-2953, Cys-2949–Cys-2962, Cys-2964–Cys-2977, Cys-2983–Cys-2993, Cys-2989–Cys-3002, and Cys-3004–Cys-3018. An N-linked (GlcNAc...) asparagine glycan is attached at Asn-2903. The EGF-like 11 domain maps to 2939–2978 (NECLNKKLSGCSQECEDLKIGYKCRCRPGFRLKDDGKTCI). The 41-residue stretch at 2979–3019 (DIDECSTTYPCSQKCINTLGSYKCLCIEGYKLKPDNPTSCK) folds into the EGF-like 12; calcium-binding domain. Asn-3045 and Asn-3086 each carry an N-linked (GlcNAc...) asparagine glycan. LDL-receptor class B repeat units follow at residues 3066-3110 (QMIY…DWVG), 3111-3153 (GNLY…DVQN), 3154-3197 (GYLY…DYIN), 3198-3240 (SRIY…FEDY), and 3241-3281 (IYWT…YHPY). A glycan (N-linked (GlcNAc...) asparagine) is linked at Asn-3176. Asn-3261 is a glycosylation site (N-linked (GlcNAc...) asparagine). Residues 3287-3328 (PNHPCKTNNAGCSNLCLLSPGGGHKCACPTNFYLGSDGKTCV) form the EGF-like 13 domain. 3 disulfides stabilise this stretch: Cys-3291/Cys-3302, Cys-3298/Cys-3312, and Cys-3314/Cys-3327. 11 consecutive LDL-receptor class A domains span residues 3329 to 3368 (SNCTASQFVCKNDKCIPFWWKCDTEDDCGDRSDEPEDCPE), 3369 to 3407 (FKCRPGQFQCSTGICTNPAFICDGDNDCQDNSDEANCDI), 3408 to 3447 (HVCLPSQFKCTNTNRCIPGIFRCNGQDNCGDGEDEKDCPE), 3448 to 3488 (VTCA…NCTQ), 3489 to 3530 (MTCG…ECDE), 3531 to 3569 (RTCEPYQFRCKNNRCVPGRWQCDYDNDCGDNSDEESCTP), 3570 to 3608 (RPCSESEFSCANGRCIAGRWKCDGDHDCADGSDEKDCIP), 3608 to 3646 (PRCEFDQYQCKNGHCIPMRWRCDADADCMDGTDEEDCGT), 3649 to 3689 (RTCP…ECLK), 3690 to 3730 (FQCP…DCES), and 3736 to 3776 (KSCS…SCSH). An N-linked (GlcNAc...) asparagine glycan is attached at Asn-3330. Cystine bridges form between Cys-3331-Cys-3343, Cys-3338-Cys-3356, Cys-3350-Cys-3366, Cys-3371-Cys-3383, Cys-3378-Cys-3396, Cys-3390-Cys-3405, Cys-3410-Cys-3423, Cys-3417-Cys-3436, Cys-3430-Cys-3445, Cys-3450-Cys-3463, Cys-3457-Cys-3476, Cys-3470-Cys-3486, Cys-3491-Cys-3504, Cys-3498-Cys-3517, Cys-3511-Cys-3528, Cys-3533-Cys-3545, Cys-3540-Cys-3558, Cys-3552-Cys-3567, Cys-3572-Cys-3584, Cys-3579-Cys-3597, Cys-3591-Cys-3606, Cys-3610-Cys-3622, Cys-3617-Cys-3635, Cys-3629-Cys-3644, Cys-3658-Cys-3676, Cys-3670-Cys-3687, Cys-3692-Cys-3706, Cys-3700-Cys-3719, Cys-3713-Cys-3728, Cys-3738-Cys-3752, Cys-3747-Cys-3765, Cys-3759-Cys-3774, Cys-3783-Cys-3796, Cys-3790-Cys-3805, Cys-3807-Cys-3820, Cys-3826-Cys-3836, Cys-3832-Cys-3845, and Cys-3847-Cys-3858. An N-linked (GlcNAc...) asparagine glycan is attached at Asn-3485. N-linked (GlcNAc...) asparagine glycosylation occurs at Asn-3659. EGF-like domains are found at residues 3779–3821 (KSYD…NSCQ) and 3822–3859 (DVNECLRFGTCSQLCNNTKGSHVCSCAKNFMKTDNMCK). An N-linked (GlcNAc...) asparagine glycan is attached at Asn-3786. Residue Asn-3837 is glycosylated (N-linked (GlcNAc...) asparagine). LDL-receptor class B repeat units follow at residues 3910 to 3952 (NKIY…THLN), 3969 to 4011 (GNIY…DPLR), 4012 to 4055 (GTMY…DYHN), and 4056 to 4100 (ERLY…FEDY). The Recognition site for proteolytical processing motif lies at 3939–3942 (RNRR). Asn-3952 is a glycosylation site (N-linked (GlcNAc...) asparagine). N-linked (GlcNAc...) asparagine glycosylation is found at Asn-4074 and Asn-4124. 7 EGF-like domains span residues 4146–4182 (VTNPCDRKKCEWLCLLSPSGPVCTCPNGKRLDNGTCV), 4195–4231 (TTDTCDLVCLNGGSCFLNARKQAKCRCQPRYNGERCQ), 4231–4267 (QINQCSDYCQNGGLCTASPSGMPTCRCPTGFTGSRCD), 4267–4303 (DQQVCTNYCHNNGSCTVNQGNQPNCRCPPTFIGDRCQ), 4303–4339 (QYQQCFNYCENNGVCQMSRDGVKQCRCPPQFEGAQCQ), 4339–4374 (QDNKCSRCQEGKCNINRQSGDVSCICPDGKIAPSCL), and 4372–4409 (SCLTCDSYCLNGGTCSISDKTQLPECLCPLEVTGMRCE). 21 disulfide bridges follow: Cys-4150–Cys-4159, Cys-4155–Cys-4168, Cys-4170–Cys-4181, Cys-4199–Cys-4209, Cys-4203–Cys-4219, Cys-4221–Cys-4230, Cys-4235–Cys-4245, Cys-4239–Cys-4255, Cys-4257–Cys-4266, Cys-4271–Cys-4281, Cys-4275–Cys-4291, Cys-4293–Cys-4302, Cys-4307–Cys-4317, Cys-4311–Cys-4327, Cys-4329–Cys-4338, Cys-4343–Cys-4351, Cys-4346–Cys-4362, Cys-4364–Cys-4373, Cys-4376–Cys-4386, Cys-4380–Cys-4397, and Cys-4399–Cys-4408. An N-linked (GlcNAc...) asparagine glycan is attached at Asn-4178. Residue Asn-4278 is glycosylated (N-linked (GlcNAc...) asparagine). Residues 4420–4443 (RTASIVIPILLLLLLLAVVAFAWY) traverse the membrane as a helical segment. At 4444-4543 (KWRIKGAKGF…ADDDLTDPLA (100 aa)) the chain is on the cytoplasmic side. Residues 4501-4506 (FTNPVY) carry the NPXY motif motif. The segment at 4522–4543 (STDEKRELLARGADDDLTDPLA) is disordered. A compositionally biased stretch (basic and acidic residues) spans 4523–4535 (TDEKRELLARGAD).

This sequence belongs to the LDLR family. In terms of assembly, binds vitellogenin and LRPAP1 (alpha 2-macroglobulin). In terms of processing, cleaved into a 85 kDa membrane-spanning subunit (LRP-85) and a 515 kDa large extracellular domain (LRP-515) that remains non-covalently associated. Somatic.

It is found in the membrane. It localises to the coated pit. In terms of biological role, endocytic receptor involved in endocytosis and in phagocytosis of apoptotic cells. Involved in cellular lipid homeostasis. Involved in the plasma clearance of chylomicron remnants and activated LRPAP1 (alpha 2-macroglobulin), as well as the local metabolism of complexes between plasminogen activators and their endogenous inhibitors. Acts as an alpha-2-macroglobulin receptor. This is Low-density lipoprotein receptor-related protein 1 (LRP1) from Gallus gallus (Chicken).